Reading from the N-terminus, the 103-residue chain is Large ribosomal subunit protein uL23 (103 aa).

Belongs to the universal ribosomal protein uL23 family. As to quaternary structure, part of the 50S ribosomal subunit. Contacts protein L29, and trigger factor when it is bound to the ribosome.

In terms of biological role, one of the early assembly proteins it binds 23S rRNA. One of the proteins that surrounds the polypeptide exit tunnel on the outside of the ribosome. Forms the main docking site for trigger factor binding to the ribosome. The chain is Large ribosomal subunit protein uL23 from Prochlorococcus marinus (strain NATL1A).